The chain runs to 384 residues: Probable inactive patatin-like protein 9 (384 aa).

The PNPLA domain occupies 33-234; that stretch reads LSIDGGGTTG…VMNNPTAAAV (202 aa). The short motif at 37–42 is the GXGXXG element; the sequence is GGGTTG. Residue Asp221 is the Proton acceptor of the active site. The DGA/G motif lies at 221–223; that stretch reads DGG. Residues 363-384 are disordered; it reads GKSSLPPSPCKESAVNPLADGR.

Belongs to the patatin family. In terms of tissue distribution, highly expressed in roots and at lower levels in flowers and siliques.

This Arabidopsis thaliana (Mouse-ear cress) protein is Probable inactive patatin-like protein 9 (PLP9).